The chain runs to 288 residues: Ribosome biogenesis GTPase A (288 aa).

The region spanning 14-179 (RRQVTEKLKL…LLDTPGILWP (166 aa)) is the CP-type G domain. Residues 58-61 (NKVD), 131-136 (NVGKST), and Gly-175 contribute to the GTP site.

It belongs to the TRAFAC class YlqF/YawG GTPase family. MTG1 subfamily. In terms of assembly, interacts with ctc. Interacts with the immature 50S ribosome subunit. 2 molecules of rbgA bind to one 50S subunit.

It localises to the cytoplasm. In terms of biological role, essential protein that is required for a late step of 50S ribosomal subunit assembly. Has GTPase activity that is stimulated by interaction with the immature 50S ribosome subunit. Binds to the 23S rRNA. Required for the association of ribosomal proteins rplP and rpmA with the large subunit. The sequence is that of Ribosome biogenesis GTPase A from Priestia megaterium (strain DSM 319 / IMG 1521) (Bacillus megaterium).